The chain runs to 438 residues: Cobyrinate a,c-diamide synthase (438 aa).

Residues 242–426 (TIAIARDAAF…FHAYFSSCPA (185 aa)) enclose the GATase cobBQ-type domain. Cys-325 (nucleophile) is an active-site residue.

This sequence belongs to the CobB/CbiA family. It depends on Mg(2+) as a cofactor.

It catalyses the reaction cob(II)yrinate + 2 L-glutamine + 2 ATP + 2 H2O = cob(II)yrinate a,c diamide + 2 L-glutamate + 2 ADP + 2 phosphate + 2 H(+). It functions in the pathway cofactor biosynthesis; adenosylcobalamin biosynthesis; cob(II)yrinate a,c-diamide from sirohydrochlorin (anaerobic route): step 10/10. In terms of biological role, catalyzes the ATP-dependent amidation of the two carboxylate groups at positions a and c of cobyrinate, using either L-glutamine or ammonia as the nitrogen source. In Herminiimonas arsenicoxydans, this protein is Cobyrinate a,c-diamide synthase.